The sequence spans 178 residues: Inorganic pyrophosphatase (178 aa).

Substrate-binding residues include K30, R44, and Y56. Mg(2+)-binding residues include D66, D71, and D103. Y142 provides a ligand contact to substrate.

It belongs to the PPase family. In terms of assembly, homohexamer. The cofactor is Mg(2+).

The protein resides in the cytoplasm. The catalysed reaction is diphosphate + H2O = 2 phosphate + H(+). Its function is as follows. Catalyzes the hydrolysis of inorganic pyrophosphate (PPi) forming two phosphate ions. The polypeptide is Inorganic pyrophosphatase (Bradyrhizobium diazoefficiens (strain JCM 10833 / BCRC 13528 / IAM 13628 / NBRC 14792 / USDA 110)).